The sequence spans 197 residues: CASP-like protein 1B2 (197 aa).

Residue alanine 2 is modified to N-acetylalanine. Topologically, residues 2–17 are cytoplasmic; it reads AREKIVVAGGTTKSWK. The chain crosses the membrane as a helical span at residues 18–38; it reads LLLGLRIFAFMATLAAAIVMS. Topologically, residues 39-69 are extracellular; that stretch reads LNKETKTLVVATIGTVPIKATLTAKFQHTPA. Residues 70–90 form a helical membrane-spanning segment; the sequence is FVFFVIANVMVSFHNLLMIVV. Residues 91–106 lie on the Cytoplasmic side of the membrane; that stretch reads QIFSRKLEYKGLRLLS. The chain crosses the membrane as a helical span at residues 107–127; it reads IAILDMLNATLVSAAANAAVF. The Extracellular portion of the chain corresponds to 128–156; sequence VAELGKNGNKHAKWNKVCDRFTTYCDHGA. A helical transmembrane segment spans residues 157–177; the sequence is GAIIAAFAGVILMLLVSAVSI. The Cytoplasmic segment spans residues 178–197; that stretch reads SRLLINSKNFSTTATTTSVV.

It belongs to the Casparian strip membrane proteins (CASP) family. In terms of assembly, homodimer and heterodimers.

The protein resides in the cell membrane. The polypeptide is CASP-like protein 1B2 (Arabidopsis thaliana (Mouse-ear cress)).